Consider the following 443-residue polypeptide: Histidinol dehydrogenase (443 aa).

NAD(+) is bound by residues Y141, Q203, and N226. S249, Q271, and H274 together coordinate substrate. Positions 271 and 274 each coordinate Zn(2+). Residues E339 and H340 each act as proton acceptor in the active site. Positions 340, 373, 427, and 432 each coordinate substrate. D373 lines the Zn(2+) pocket. Zn(2+) is bound at residue H432.

The protein belongs to the histidinol dehydrogenase family. It depends on Zn(2+) as a cofactor.

It carries out the reaction L-histidinol + 2 NAD(+) + H2O = L-histidine + 2 NADH + 3 H(+). Its pathway is amino-acid biosynthesis; L-histidine biosynthesis; L-histidine from 5-phospho-alpha-D-ribose 1-diphosphate: step 9/9. Functionally, catalyzes the sequential NAD-dependent oxidations of L-histidinol to L-histidinaldehyde and then to L-histidine. This Chlorobium luteolum (strain DSM 273 / BCRC 81028 / 2530) (Pelodictyon luteolum) protein is Histidinol dehydrogenase.